Consider the following 703-residue polypeptide: Polyribonucleotide nucleotidyltransferase (703 aa).

Positions 486 and 492 each coordinate Mg(2+). Residues 554-613 enclose the KH domain; it reads PKIITTNIDPEKIRDVIGPGGKMINKIIAETGVKIDIEEDGRVYILTPDSAAAQKALKII. The 69-residue stretch at 623-691 folds into the S1 motif domain; sequence GEVYLGKVVR…KQGRINLSRK (69 aa).

Belongs to the polyribonucleotide nucleotidyltransferase family. Requires Mg(2+) as cofactor.

It localises to the cytoplasm. It carries out the reaction RNA(n+1) + phosphate = RNA(n) + a ribonucleoside 5'-diphosphate. Functionally, involved in mRNA degradation. Catalyzes the phosphorolysis of single-stranded polyribonucleotides processively in the 3'- to 5'-direction. The chain is Polyribonucleotide nucleotidyltransferase from Ruminiclostridium cellulolyticum (strain ATCC 35319 / DSM 5812 / JCM 6584 / H10) (Clostridium cellulolyticum).